A 761-amino-acid chain; its full sequence is Phosphoribosylformylglycinamidine synthase subunit PurL (761 aa).

Positions 1–16 (MTGNPAAPAATSVSPP) are enriched in low complexity. Positions 1-21 (MTGNPAAPAATSVSPPAEQPY) are disordered. Residue H57 is part of the active site. Residues Y60 and K101 each contribute to the ATP site. E103 provides a ligand contact to Mg(2+). Substrate contacts are provided by residues 104-107 (SHNH) and R126. H105 (proton acceptor) is an active-site residue. D127 contributes to the Mg(2+) binding site. Q252 is a binding site for substrate. Position 280 (D280) interacts with Mg(2+). Position 329-331 (329-331 (ESQ)) interacts with substrate. Residues N519 and G556 each contribute to the ATP site. A Mg(2+)-binding site is contributed by N557. S559 is a binding site for substrate.

This sequence belongs to the FGAMS family. In terms of assembly, monomer. Part of the FGAM synthase complex composed of 1 PurL, 1 PurQ and 2 PurS subunits.

The protein localises to the cytoplasm. It catalyses the reaction N(2)-formyl-N(1)-(5-phospho-beta-D-ribosyl)glycinamide + L-glutamine + ATP + H2O = 2-formamido-N(1)-(5-O-phospho-beta-D-ribosyl)acetamidine + L-glutamate + ADP + phosphate + H(+). The protein operates within purine metabolism; IMP biosynthesis via de novo pathway; 5-amino-1-(5-phospho-D-ribosyl)imidazole from N(2)-formyl-N(1)-(5-phospho-D-ribosyl)glycinamide: step 1/2. In terms of biological role, part of the phosphoribosylformylglycinamidine synthase complex involved in the purines biosynthetic pathway. Catalyzes the ATP-dependent conversion of formylglycinamide ribonucleotide (FGAR) and glutamine to yield formylglycinamidine ribonucleotide (FGAM) and glutamate. The FGAM synthase complex is composed of three subunits. PurQ produces an ammonia molecule by converting glutamine to glutamate. PurL transfers the ammonia molecule to FGAR to form FGAM in an ATP-dependent manner. PurS interacts with PurQ and PurL and is thought to assist in the transfer of the ammonia molecule from PurQ to PurL. In Frankia casuarinae (strain DSM 45818 / CECT 9043 / HFP020203 / CcI3), this protein is Phosphoribosylformylglycinamidine synthase subunit PurL.